The primary structure comprises 919 residues: Chitin synthase 1 (919 aa).

Disordered stretches follow at residues 1–69 (MSYD…SFQT) and 109–134 (NLAS…ALGP). Low complexity predominate over residues 11-30 (GQGRDYARQQRQQRSYQLSD). Residues N187 and N556 are each glycosylated (N-linked (GlcNAc...) asparagine). 7 consecutive transmembrane segments (helical) span residues 594 to 614 (IVLL…SIII), 630 to 650 (LVVF…FLVL), 668 to 688 (IASF…SLWL), 713 to 733 (VLIA…ILYA), 742 to 762 (FPQY…YAFC), 843 to 863 (LVAF…NVNG), and 887 to 919 (IILW…FRKT).

It belongs to the chitin synthase family. Class III subfamily.

Its subcellular location is the cell membrane. It is found in the cytoplasmic vesicle membrane. It catalyses the reaction [(1-&gt;4)-N-acetyl-beta-D-glucosaminyl](n) + UDP-N-acetyl-alpha-D-glucosamine = [(1-&gt;4)-N-acetyl-beta-D-glucosaminyl](n+1) + UDP + H(+). Polymerizes chitin, a structural polymer of the cell wall and septum, by transferring the sugar moiety of UDP-GlcNAc to the non-reducing end of the growing chitin polymer. The sequence is that of Chitin synthase 1 from Mycosarcoma maydis (Corn smut fungus).